We begin with the raw amino-acid sequence, 637 residues long: Early transcription factor 70 kDa subunit (637 aa).

In terms of domain architecture, Helicase ATP-binding spans 32–185 (RTIIDENRSV…GHIIDLMSEE (154 aa)). 45-52 (HIMGSGKT) contributes to the ATP binding site. A DEXH box motif is present at residues 135–138 (DEAH). In terms of domain architecture, Helicase C-terminal spans 327–507 (KFKYFINRIQ…VLPFDIKKLL (181 aa)).

The protein belongs to the helicase family. VETF subfamily. In terms of assembly, heterodimer of a 70 kDa and a 82 kDa subunit. Part of the early transcription complex composed of ETF, RAP94/OPG109, and the DNA-directed RNA polymerase.

The protein resides in the virion. Its function is as follows. Acts with RNA polymerase to initiate transcription from early gene promoters. Is recruited by the RPO-associated protein of 94 kDa RAP94/OPG109 to form the early transcription complex, which also contains the core RNA polymerase. ETF heterodimer binds to early gene promoters. This chain is Early transcription factor 70 kDa subunit (OPG118), found in Homo sapiens (Human).